The chain runs to 396 residues: Tryptophan synthase beta chain (396 aa).

Lys86 is subject to N6-(pyridoxal phosphate)lysine.

The protein belongs to the TrpB family. As to quaternary structure, tetramer of two alpha and two beta chains. The cofactor is pyridoxal 5'-phosphate.

The catalysed reaction is (1S,2R)-1-C-(indol-3-yl)glycerol 3-phosphate + L-serine = D-glyceraldehyde 3-phosphate + L-tryptophan + H2O. It functions in the pathway amino-acid biosynthesis; L-tryptophan biosynthesis; L-tryptophan from chorismate: step 5/5. In terms of biological role, the beta subunit is responsible for the synthesis of L-tryptophan from indole and L-serine. The chain is Tryptophan synthase beta chain from Serratia proteamaculans (strain 568).